A 366-amino-acid polypeptide reads, in one-letter code: uncharacterized protein (366 aa).

This is an uncharacterized protein from Methanocaldococcus jannaschii (strain ATCC 43067 / DSM 2661 / JAL-1 / JCM 10045 / NBRC 100440) (Methanococcus jannaschii).